The sequence spans 402 residues: Phosphoglycerate kinase (402 aa).

Residues 29-31, Arg45, 69-72, Arg125, and Arg158 contribute to the substrate site; these read DFN and HLGR. Residues Lys209, Glu331, and 357–360 contribute to the ATP site; that span reads GGDT.

This sequence belongs to the phosphoglycerate kinase family.

It localises to the cytoplasm. The catalysed reaction is (2R)-3-phosphoglycerate + ATP = (2R)-3-phospho-glyceroyl phosphate + ADP. Its pathway is carbohydrate degradation; glycolysis; pyruvate from D-glyceraldehyde 3-phosphate: step 2/5. The chain is Phosphoglycerate kinase (pgk) from Helicobacter pylori (strain J99 / ATCC 700824) (Campylobacter pylori J99).